Consider the following 486-residue polypeptide: Homoserine O-acetyltransferase (486 aa).

In terms of domain architecture, AB hydrolase-1 spans 66–436 (NVLVICHALT…PEGHDAFLLE (371 aa)). The active site involves serine 162. Catalysis depends on serine 162, which acts as the Nucleophile. The tract at residues 248–274 (KFSRRSPSIAQQQKAQKAEVRKPSTVS) is disordered. The span at 250–262 (SRRSPSIAQQQKA) shows a compositional bias: polar residues. Catalysis depends on residues aspartate 401 and histidine 430.

It belongs to the AB hydrolase superfamily. MetX family.

It catalyses the reaction L-homoserine + acetyl-CoA = O-acetyl-L-homoserine + CoA. The protein operates within amino-acid biosynthesis; L-methionine biosynthesis via de novo pathway; O-acetyl-L-homoserine from L-homoserine: step 1/1. Functionally, commits homoserine to the methionine biosynthesis pathway by catalyzing its O-acetylation. This Saccharomyces pastorianus (Lager yeast) protein is Homoserine O-acetyltransferase (MET2).